Reading from the N-terminus, the 250-residue chain is Ribosomal RNA small subunit methyltransferase J (250 aa).

S-adenosyl-L-methionine-binding positions include 101-102, 117-118, 153-154, and Asp171; these read RD, ER, and SS.

It belongs to the methyltransferase superfamily. RsmJ family.

The protein localises to the cytoplasm. It carries out the reaction guanosine(1516) in 16S rRNA + S-adenosyl-L-methionine = N(2)-methylguanosine(1516) in 16S rRNA + S-adenosyl-L-homocysteine + H(+). In terms of biological role, specifically methylates the guanosine in position 1516 of 16S rRNA. This chain is Ribosomal RNA small subunit methyltransferase J, found in Shigella boydii serotype 18 (strain CDC 3083-94 / BS512).